Here is a 203-residue protein sequence, read N- to C-terminus: Shikimate kinase (203 aa).

Glycine 32 to alanine 37 is an ATP binding site. Residue threonine 36 participates in Mg(2+) binding. Residues aspartate 54, arginine 78, and glycine 100 each contribute to the substrate site. Position 138 (arginine 138) interacts with ATP. A substrate-binding site is contributed by arginine 157.

It belongs to the shikimate kinase family. In terms of assembly, monomer. It depends on Mg(2+) as a cofactor.

The protein resides in the cytoplasm. It carries out the reaction shikimate + ATP = 3-phosphoshikimate + ADP + H(+). The protein operates within metabolic intermediate biosynthesis; chorismate biosynthesis; chorismate from D-erythrose 4-phosphate and phosphoenolpyruvate: step 5/7. Its function is as follows. Catalyzes the specific phosphorylation of the 3-hydroxyl group of shikimic acid using ATP as a cosubstrate. This is Shikimate kinase from Mesorhizobium japonicum (strain LMG 29417 / CECT 9101 / MAFF 303099) (Mesorhizobium loti (strain MAFF 303099)).